The primary structure comprises 607 residues: Rap1 GTPase-GDP dissociation stimulator 1-B (607 aa).

ARM repeat units follow at residues 79 to 118 (ELMR…NICY), 170 to 211 (DSLQ…NLAE), 347 to 390 (DGNC…NLAI), 391 to 431 (PVVN…MLID), and 479 to 519 (SKDV…LIAA).

Interacts with ralB. Probably interacts with the post-translationally isoprenylated (geranyl-geranylation) forms of ral proteins. Interacts with both GDP-bound and GTP-bound forms of ralA, but interaction is much stronger with ralA-GDP.

The protein localises to the cytoplasm. The protein resides in the cytosol. It is found in the endoplasmic reticulum. Its subcellular location is the mitochondrion. Its function is as follows. Stimulates GDP/GTP exchange reaction of a group of small GTP-binding proteins (G proteins) including Rap1a/Rap1b, RhoA, RhoB and KRas, by stimulating the dissociation of GDP from and the subsequent binding of GTP to each small G protein. The sequence is that of Rap1 GTPase-GDP dissociation stimulator 1-B (rap1gds1-b) from Xenopus laevis (African clawed frog).